Reading from the N-terminus, the 207-residue chain is GTP cyclohydrolase 1 (207 aa).

Residues Cys-88, His-91, and Cys-162 each contribute to the Zn(2+) site.

Belongs to the GTP cyclohydrolase I family. Toroid-shaped homodecamer, composed of two pentamers of five dimers.

The catalysed reaction is GTP + H2O = 7,8-dihydroneopterin 3'-triphosphate + formate + H(+). Its pathway is cofactor biosynthesis; 7,8-dihydroneopterin triphosphate biosynthesis; 7,8-dihydroneopterin triphosphate from GTP: step 1/1. This is GTP cyclohydrolase 1 from Sulfurisphaera tokodaii (strain DSM 16993 / JCM 10545 / NBRC 100140 / 7) (Sulfolobus tokodaii).